A 204-amino-acid polypeptide reads, in one-letter code: Large ribosomal subunit protein uL4 (204 aa).

Polar residues predominate over residues 42-52 (GTKAQKSRSQV). The interval 42–70 (GTKAQKSRSQVSGTTKKSKKQKGGGARHG) is disordered.

Belongs to the universal ribosomal protein uL4 family. In terms of assembly, part of the 50S ribosomal subunit.

One of the primary rRNA binding proteins, this protein initially binds near the 5'-end of the 23S rRNA. It is important during the early stages of 50S assembly. It makes multiple contacts with different domains of the 23S rRNA in the assembled 50S subunit and ribosome. Its function is as follows. Forms part of the polypeptide exit tunnel. The sequence is that of Large ribosomal subunit protein uL4 from Xylella fastidiosa (strain M12).